The sequence spans 129 residues: Large ribosomal subunit protein bL19 (129 aa).

It belongs to the bacterial ribosomal protein bL19 family.

Functionally, this protein is located at the 30S-50S ribosomal subunit interface and may play a role in the structure and function of the aminoacyl-tRNA binding site. The sequence is that of Large ribosomal subunit protein bL19 from Paraburkholderia phytofirmans (strain DSM 17436 / LMG 22146 / PsJN) (Burkholderia phytofirmans).